We begin with the raw amino-acid sequence, 501 residues long: Beta-secretase 1 (501 aa).

Positions 1–21 (MAQALPWLLLWMGSGVLPAHG) are cleaved as a signal peptide. Positions 22 to 45 (SQPGIRLPLRSGLGGAPLGLRLPR) are excised as a propeptide. The Extracellular portion of the chain corresponds to 22 to 457 (SQPGIRLPLR…PQTDESTLMT (436 aa)). A disordered region spans residues 39-58 (LGLRLPRETDEESEEPGRRG). Residues 75–416 (YYVEMTLGSP…DRARKRIGFA (342 aa)) enclose the Peptidase A1 domain. Residue Asp93 is part of the active site. Lys126 is subject to N6-acetyllysine. Residues Asn153, Asn172, and Asn223 are each glycosylated (N-linked (GlcNAc...) asparagine). Disulfide bonds link Cys216/Cys420, Cys278/Cys443, and Cys330/Cys380. N6-acetyllysine occurs at positions 275, 279, and 285. Asp289 is an active-site residue. N6-acetyllysine is present on residues Lys299, Lys300, and Lys307. Asn354 carries N-linked (GlcNAc...) asparagine glycosylation. A helical membrane pass occupies residues 458 to 478 (IAYVMAAICALFMLPLCLMVC). Residues Cys474, Cys478, Cys482, and Cys485 are each lipidated (S-palmitoyl cysteine). The Cytoplasmic segment spans residues 479–501 (QWRCLRCLRHQHDDFADDISLLK). Positions 479 to 501 (QWRCLRCLRHQHDDFADDISLLK) are interaction with RTN3. The DXXLL signature appears at 496–500 (DISLL). Ser498 is subject to Phosphoserine. A Glycyl lysine isopeptide (Lys-Gly) (interchain with G-Cter in ubiquitin) cross-link involves residue Lys501.

It belongs to the peptidase A1 family. Monomer. Interacts (via DXXLL motif) with GGA1, GGA2 and GGA3 (via their VHS domain); the interaction highly increases when BACE1 is phosphorylated at Ser-498. Interacts with RTN1; RTN2; RTN3 and RTN4; the interaction leads to inhibition of amyloid precursor protein processing. Interacts with SNX6. Interacts with PCSK9. Interacts with NAT8 and NAT8B. Interacts with BIN1. Interacts (via extracellular domain) with ADAM10 (via extracellular domain). Interacts with SORL1; this interaction may affect binding with APP and hence reduce APP cleavage. Interacts with NRDC AND NRG1. Post-translationally, palmitoylation mediates lipid raft localization. In terms of processing, acetylated in the endoplasmic reticulum at Lys-126, Lys-275, Lys-279, Lys-285, Lys-299, Lys-300 and Lys-307. Acetylation by NAT8 and NAT8B is transient and deacetylation probably occurs in the Golgi. Acetylation regulates the maturation, the transport to the plasma membrane, the stability and the expression of the protein. Ubiquitinated at Lys-501, ubiquitination leads to lysosomal degradation. Monoubiquitinated and 'Lys-63'-linked polyubitinated. Deubiquitnated by USP8; inhibits lysosomal degradation. Post-translationally, phosphorylation at Ser-498 is required for interaction with GGA1 and retrograded transport from endosomal compartments to the trans-Golgi network. Non-phosphorylated BACE1 enters a direct recycling route to the cell surface. In terms of processing, N-Glycosylated. Addition of a bisecting N-acetylglucosamine by MGAT3 blocks lysosomal targeting, further degradation and is required for maintaining stability under stress conditions.

The protein resides in the cell membrane. It localises to the golgi apparatus. It is found in the trans-Golgi network. The protein localises to the endoplasmic reticulum. Its subcellular location is the endosome. The protein resides in the cell surface. It localises to the cytoplasmic vesicle membrane. It is found in the membrane raft. The protein localises to the lysosome. Its subcellular location is the late endosome. The protein resides in the early endosome. It localises to the recycling endosome. It is found in the cell projection. The protein localises to the axon. Its subcellular location is the dendrite. It carries out the reaction Broad endopeptidase specificity. Cleaves Glu-Val-Asn-Leu-|-Asp-Ala-Glu-Phe in the Swedish variant of Alzheimer's amyloid precursor protein.. Inhibited by RTN3 and RTN4. In terms of biological role, responsible for the proteolytic processing of the amyloid precursor protein (APP). Cleaves at the N-terminus of the A-beta peptide sequence, between residues 671 and 672 of APP, leads to the generation and extracellular release of beta-cleaved soluble APP, and a corresponding cell-associated C-terminal fragment which is later released by gamma-secretase. Cleaves CHL1. The sequence is that of Beta-secretase 1 (BACE1) from Bos taurus (Bovine).